Reading from the N-terminus, the 484-residue chain is NADH-ubiquinone oxidoreductase chain 4 (484 aa).

14 helical membrane-spanning segments follow: residues 1–21 (MLTL…PMQG), 33–53 (LALG…GEFD), 77–97 (VDGI…ICIL), 109–129 (YFLM…VVLD), 130–150 (ILLF…IVGI), 162–182 (FLLF…FLVI), 206–226 (LLWL…PFHV), 236–256 (PLAG…YGYM), 270–290 (FSPL…LATL), 295–315 (FKAL…LGLF), 326–346 (LLLS…VGGV), 365–385 (YMPL…AVPL), 405–425 (VFAV…IWLY), and 448–468 (FMLL…PNII).

This sequence belongs to the complex I subunit 4 family.

It localises to the mitochondrion inner membrane. It carries out the reaction a ubiquinone + NADH + 5 H(+)(in) = a ubiquinol + NAD(+) + 4 H(+)(out). Core subunit of the mitochondrial membrane respiratory chain NADH dehydrogenase (Complex I) that is believed to belong to the minimal assembly required for catalysis. Complex I functions in the transfer of electrons from NADH to the respiratory chain. The immediate electron acceptor for the enzyme is believed to be ubiquinone. The chain is NADH-ubiquinone oxidoreductase chain 4 (ND4) from Mycosarcoma maydis (Corn smut fungus).